Here is a 160-residue protein sequence, read N- to C-terminus: Protein-export protein SecB (160 aa).

This sequence belongs to the SecB family. In terms of assembly, homotetramer, a dimer of dimers. One homotetramer interacts with 1 SecA dimer.

It localises to the cytoplasm. In terms of biological role, one of the proteins required for the normal export of preproteins out of the cell cytoplasm. It is a molecular chaperone that binds to a subset of precursor proteins, maintaining them in a translocation-competent state. It also specifically binds to its receptor SecA. This is Protein-export protein SecB from Rhizobium johnstonii (strain DSM 114642 / LMG 32736 / 3841) (Rhizobium leguminosarum bv. viciae).